Here is a 363-residue protein sequence, read N- to C-terminus: Dihydroorotate dehydrogenase (quinone) (363 aa).

Residues 62–66 (AGFDK) and Thr-86 each bind FMN. Position 66 (Lys-66) interacts with substrate. 111-115 (NRMGF) contacts substrate. Asn-142 and Asn-175 together coordinate FMN. Position 175 (Asn-175) interacts with substrate. Ser-178 functions as the Nucleophile in the catalytic mechanism. Asn-180 contributes to the substrate binding site. FMN is bound by residues Lys-216 and Thr-244. 245-246 (NT) provides a ligand contact to substrate. FMN contacts are provided by residues Gly-267, Gly-296, and 317-318 (YT).

The protein belongs to the dihydroorotate dehydrogenase family. Type 2 subfamily. As to quaternary structure, monomer. Requires FMN as cofactor.

It is found in the cell membrane. It carries out the reaction (S)-dihydroorotate + a quinone = orotate + a quinol. The protein operates within pyrimidine metabolism; UMP biosynthesis via de novo pathway; orotate from (S)-dihydroorotate (quinone route): step 1/1. In terms of biological role, catalyzes the conversion of dihydroorotate to orotate with quinone as electron acceptor. The protein is Dihydroorotate dehydrogenase (quinone) of Anaeromyxobacter sp. (strain Fw109-5).